A 408-amino-acid chain; its full sequence is UPF0761 membrane protein NMCC_0461 (408 aa).

6 consecutive transmembrane segments (helical) span residues 43-63 (LLALVPVLTVMVAVASIFPVF), 100-120 (LTAIGSVMLVVTSLMLIRTID), 139-159 (FLVYWALLTFGPLSLGVGISF), 176-196 (WSGALRTAATLTFMTLLLWGL), 210-230 (AFVGALATAFCLETARSLFTW), and 248-268 (VPFFLLWLNLLWTLVLGGAVL).

The protein belongs to the UPF0761 family.

The protein localises to the cell inner membrane. The chain is UPF0761 membrane protein NMCC_0461 from Neisseria meningitidis serogroup C (strain 053442).